Here is a 76-residue protein sequence, read N- to C-terminus: ATP synthase subunit 9, mitochondrial (76 aa).

Met1 carries the post-translational modification N-formylmethionine. 2 helical membrane-spanning segments follow: residues 14-34 (ISTIGLLGAGIGIAIVFAALI) and 52-72 (ILGFALSEATGLFCLMVSFLL).

It belongs to the ATPase C chain family. F-type ATPases have 2 components, CF(1) - the catalytic core - and CF(0) - the membrane proton channel. In yeast, the dimeric form of ATP synthase consists of 18 polypeptides: alpha, beta, gamma, delta, epsilon, 4 (B), 5 (OSCP), 6 (A), 8, 9 (C), d, E (Tim11), f, g, h, i, j and k.

The protein localises to the mitochondrion membrane. Functionally, mitochondrial membrane ATP synthase (F(1)F(0) ATP synthase or Complex V) produces ATP from ADP in the presence of a proton gradient across the membrane which is generated by electron transport complexes of the respiratory chain. F-type ATPases consist of two structural domains, F(1) - containing the extramembraneous catalytic core and F(0) - containing the membrane proton channel, linked together by a central stalk and a peripheral stalk. During catalysis, ATP synthesis in the catalytic domain of F(1) is coupled via a rotary mechanism of the central stalk subunits to proton translocation. Part of the complex F(0) domain. A homomeric c-ring of probably 10 subunits is part of the complex rotary element. The chain is ATP synthase subunit 9, mitochondrial (ATP9) from Saccharomyces paradoxus (Yeast).